The following is a 438-amino-acid chain: Protein maelstrom 2 (438 aa).

A DNA-binding region (HMG box) is located at residues 2–69 (APKKRNGFMT…LERTAKKERL (68 aa)). A disordered region spans residues 374-438 (KEMGSRDLSP…NMGAGKKIAR (65 aa)). Residues 381–391 (LSPSSSHQSVS) are compositionally biased toward polar residues.

The protein belongs to the maelstrom family.

The protein resides in the cytoplasm. It localises to the nucleus. In terms of biological role, involved both in the piRNA and miRNA metabolic processes. As a component of the meiotic nuage, plays a central role during oogenesis by repressing transposable elements and preventing their mobilization, which is essential for the germline integrity. Repression of transposable elements is mediated via the piRNA metabolic process, which mediates the repression of transposable elements during meiosis by forming complexes composed of piRNAs and Piwi proteins and governs the repression of transposons. As a nuclear component, it is required for proper differentiation in the germline stem cell (GSC) lineage by repressing microRNA-7 (miR-7), thereby acting as an indirect regulator of bag-of-marbles (Bam). Acts by binding to the promoter of miR-7 gene and repressing its expression; miR-7 repression alleviates the Bam repression by miR-7, thereby allowing differentiation in the germline stem cell (GSC) lineage. This Drosophila persimilis (Fruit fly) protein is Protein maelstrom 2 (mael2).